The primary structure comprises 278 residues: Large ribosomal subunit protein uL2 (278 aa).

Disordered regions lie at residues 1 to 20 (MGIR…SVSD), 25 to 58 (TRST…GGGH), and 223 to 278 (GVVM…GKKR). The span at 37–58 (LHGKGGRNAHGRITTRHKGGGH) shows a compositional bias: basic residues. A compositionally biased stretch (basic and acidic residues) spans 253-268 (PEGRTRKPNKPSDKLI). Positions 269–278 (VRRRRTGKKR) are enriched in basic residues.

Belongs to the universal ribosomal protein uL2 family. Part of the 50S ribosomal subunit. Forms a bridge to the 30S subunit in the 70S ribosome.

Its function is as follows. One of the primary rRNA binding proteins. Required for association of the 30S and 50S subunits to form the 70S ribosome, for tRNA binding and peptide bond formation. It has been suggested to have peptidyltransferase activity; this is somewhat controversial. Makes several contacts with the 16S rRNA in the 70S ribosome. In Mycolicibacterium smegmatis (strain ATCC 700084 / mc(2)155) (Mycobacterium smegmatis), this protein is Large ribosomal subunit protein uL2.